The chain runs to 170 residues: MGEFSATILAASQAAEEGGGGSNFLIPNGTFFAVLIIFLIVLGVISKWVVPPISKVLAEREAMLAKTAADNRKSAEQVAAAQADYEKEMAEARAQASALRDEARAAGRSVVDEKRAQASGEVAQTLTQADQQLSAQGDQVRSGLESSVDGLSAKLASRILGVDVNSGGTQ.

A helical transmembrane segment spans residues Leu25–Ile45. The tract at residues Glu121–Ser147 is disordered. Residues Val122–Gln139 show a composition bias toward polar residues.

It belongs to the ATPase B chain family. As to quaternary structure, F-type ATPases have 2 components, F(1) - the catalytic core - and F(0) - the membrane proton channel. F(1) has five subunits: alpha(3), beta(3), gamma(1), delta(1), epsilon(1). F(0) has three main subunits: a(1), b(2) and c(10-14). The alpha and beta chains form an alternating ring which encloses part of the gamma chain. F(1) is attached to F(0) by a central stalk formed by the gamma and epsilon chains, while a peripheral stalk is formed by the delta and b chains.

It is found in the cell membrane. F(1)F(0) ATP synthase produces ATP from ADP in the presence of a proton or sodium gradient. F-type ATPases consist of two structural domains, F(1) containing the extramembraneous catalytic core and F(0) containing the membrane proton channel, linked together by a central stalk and a peripheral stalk. During catalysis, ATP synthesis in the catalytic domain of F(1) is coupled via a rotary mechanism of the central stalk subunits to proton translocation. In terms of biological role, component of the F(0) channel, it forms part of the peripheral stalk, linking F(1) to F(0). The polypeptide is ATP synthase subunit b (Mycolicibacterium smegmatis (strain ATCC 700084 / mc(2)155) (Mycobacterium smegmatis)).